We begin with the raw amino-acid sequence, 257 residues long: MVLIRVLANLLLLQLSHAQKSSELVVGGDECNINEHRSLVFLYNSSFGCGGTLINQEWVLSAAHCDMENMRIYLGWHNFSLPNMNQKRRVAKEKFFCLSSKNYTEWDKDIMLIKMNRPVTYSTHVAPLSLPSSPPSVGSVCRIMGWGAITSPNETYPDVPHCANINILNYTVCRAAHPWLPAQSRTLCAGILQGGIDTCKGDSGGPLICNGQIQGIVSWGDNPCAQPLKPGHYTNVFDYTDWIQSIIAGNTTATCPP.

A signal peptide spans 1–18 (MVLIRVLANLLLLQLSHA). Positions 19-24 (QKSSEL) are excised as a propeptide. Positions 25–248 (VVGGDECNIN…YTDWIQSIIA (224 aa)) constitute a Peptidase S1 domain. 6 disulfides stabilise this stretch: cysteine 31–cysteine 162, cysteine 49–cysteine 65, cysteine 97–cysteine 255, cysteine 141–cysteine 209, cysteine 173–cysteine 188, and cysteine 199–cysteine 224. Residue asparagine 44 is glycosylated (N-linked (GlcNAc...) asparagine). The active-site Charge relay system is histidine 64. Asparagine 78 and asparagine 102 each carry an N-linked (GlcNAc...) asparagine glycan. Aspartate 109 (charge relay system) is an active-site residue. Residues asparagine 153 and asparagine 169 are each glycosylated (N-linked (GlcNAc...) asparagine). Residue serine 203 is the Charge relay system of the active site. N-linked (GlcNAc...) asparagine glycosylation is present at asparagine 250.

As to quaternary structure, monomer. Glycosylated. Contains 23.0% of hexoses, 8.3% of hexosamines and 1.0% of sialic acids. In terms of tissue distribution, expressed by the venom gland.

The protein resides in the secreted. Inhibited by diisopropylfluorophosphate (DFP) and PMSF. Functionally, snake venom serine protease that has fibrinogenolytic activities by hydrolyzing the beta chain of fibrinogen (FGB). Typical arginine esterase which hydrolyzes esters and amides of arginine. The sequence is that of Beta-fibrinogenase from Macrovipera lebetinus (Levantine viper).